Here is an 859-residue protein sequence, read N- to C-terminus: Cleavage factor two protein 2 (859 aa).

The interval 560–611 (PDDSDNVNQNSRKRPLKDGAKTTSPVNEEDNKNEEEDGYNMSDPISKRSKHR) is disordered. The span at 586-597 (NEEDNKNEEEDG) shows a compositional bias: acidic residues.

In terms of assembly, component of the cleavage and polyadenylation factor (CPF) complex, which is composed of at least PTI1, SYC1, SSU72, GLC7, MPE1, REF2, PFS2, PTA1, YSH1/BRR5, SWD2, CFT2/YDH1, YTH1, CFT1/YHH1, FIP1 and PAP1. Interacts with the CTD domain of RPB1/RNA polymerase II; the interaction is enhanced upon phosphorylation of the RPB1 CTD domain. Interacts with PCF11.

It localises to the nucleus. Functionally, RNA-binding component of the cleavage and polyadenylation factor (CPF) complex, which plays a key role in polyadenylation-dependent pre-mRNA 3'-end formation and cooperates with cleavage factors including the CFIA complex and NAB4/CFIB. May be involved in poly(A)-site recognition. May be involved in the association of the CPF, CPFIA and RNA polymerase II complexes. In Saccharomyces cerevisiae (strain ATCC 204508 / S288c) (Baker's yeast), this protein is Cleavage factor two protein 2 (CFT2).